We begin with the raw amino-acid sequence, 283 residues long: Bifunctional protein FolD (283 aa).

Residues 164–166 (GRS), serine 189, and isoleucine 230 contribute to the NADP(+) site.

The protein belongs to the tetrahydrofolate dehydrogenase/cyclohydrolase family. In terms of assembly, homodimer.

The enzyme catalyses (6R)-5,10-methylene-5,6,7,8-tetrahydrofolate + NADP(+) = (6R)-5,10-methenyltetrahydrofolate + NADPH. It carries out the reaction (6R)-5,10-methenyltetrahydrofolate + H2O = (6R)-10-formyltetrahydrofolate + H(+). Its pathway is one-carbon metabolism; tetrahydrofolate interconversion. Functionally, catalyzes the oxidation of 5,10-methylenetetrahydrofolate to 5,10-methenyltetrahydrofolate and then the hydrolysis of 5,10-methenyltetrahydrofolate to 10-formyltetrahydrofolate. The sequence is that of Bifunctional protein FolD from Lacticaseibacillus paracasei (strain ATCC 334 / BCRC 17002 / CCUG 31169 / CIP 107868 / KCTC 3260 / NRRL B-441) (Lactobacillus paracasei).